Here is a 153-residue protein sequence, read N- to C-terminus: Protein SprT-like (153 aa).

The region spanning 6–148 (LQQLTEQLSL…CGKCGGKIKE (143 aa)) is the SprT-like domain. Residue H67 participates in Zn(2+) binding. Residue E68 is part of the active site. H71 provides a ligand contact to Zn(2+).

It belongs to the SprT family. Requires Zn(2+) as cofactor.

It localises to the cytoplasm. The protein is Protein SprT-like of Bacillus licheniformis (strain ATCC 14580 / DSM 13 / JCM 2505 / CCUG 7422 / NBRC 12200 / NCIMB 9375 / NCTC 10341 / NRRL NRS-1264 / Gibson 46).